The sequence spans 417 residues: Serine hydroxymethyltransferase (417 aa).

Residues Leu-121 and 125–127 each bind (6S)-5,6,7,8-tetrahydrofolate; that span reads GHL. Lys-229 bears the N6-(pyridoxal phosphate)lysine mark. 355-357 contributes to the (6S)-5,6,7,8-tetrahydrofolate binding site; sequence SPF.

The protein belongs to the SHMT family. As to quaternary structure, homodimer. It depends on pyridoxal 5'-phosphate as a cofactor.

The protein localises to the cytoplasm. It catalyses the reaction (6R)-5,10-methylene-5,6,7,8-tetrahydrofolate + glycine + H2O = (6S)-5,6,7,8-tetrahydrofolate + L-serine. It participates in one-carbon metabolism; tetrahydrofolate interconversion. Its pathway is amino-acid biosynthesis; glycine biosynthesis; glycine from L-serine: step 1/1. Functionally, catalyzes the reversible interconversion of serine and glycine with tetrahydrofolate (THF) serving as the one-carbon carrier. This reaction serves as the major source of one-carbon groups required for the biosynthesis of purines, thymidylate, methionine, and other important biomolecules. Also exhibits THF-independent aldolase activity toward beta-hydroxyamino acids, producing glycine and aldehydes, via a retro-aldol mechanism. This is Serine hydroxymethyltransferase from Shewanella frigidimarina (strain NCIMB 400).